Here is a 631-residue protein sequence, read N- to C-terminus: Tumor protein p73 (631 aa).

A transactivation region spans residues 1-43 (MAQTSSSSSSTFEHLWSSLEPDSTYFDLPQPSQGTSEASGSEE). 2 disordered regions span residues 23 to 43 (STYF…GSEE) and 69 to 113 (SRAA…NTDY). Threonine 24 is subject to Phosphothreonine; by PLK1. A Phosphotyrosine; by SRC and HCK modification is found at tyrosine 25. Composition is skewed to polar residues over residues 30–43 (QPSQ…GSEE) and 86–100 (PTHS…TFDT). Tyrosine 91 carries the phosphotyrosine; by ABL1 modification. Residues 123-302 (FQQSSTAKSA…DRKADEDHYR (180 aa)) are DNA-binding. 4 residues coordinate Zn(2+): cysteine 186, histidine 189, cysteine 250, and cysteine 254. Polar residues predominate over residues 306–315 (ALNESTTKNG). Positions 306–334 (ALNESTTKNGAASKRAFKQSPPAIPALGT) are disordered. Residues 337 to 372 (KKRRHGDEDMFYMHVRGRENFEILMKVKESLELMEL) are interaction with HIPK2. The interval 337–378 (KKRRHGDEDMFYMHVRGRENFEILMKVKESLELMELVPQPLV) is oligomerization. Residues 477–481 (PPPPY) carry the PPxY motif motif. The region spanning 479-545 (PPYHADPSLV…WRGLQDLKQS (67 aa)) is the SAM domain. A Glycyl lysine isopeptide (Lys-Gly) (interchain with G-Cter in SUMO); alternate cross-link involves residue lysine 622. Lysine 622 participates in a covalent cross-link: Glycyl lysine isopeptide (Lys-Gly) (interchain with G-Cter in SUMO2); alternate.

Belongs to the p53 family. In terms of assembly, found in a complex with p53/TP53 and CABLES1. The C-terminal oligomerization domain binds to the ABL1 tyrosine kinase SH3 domain. Interacts with HECW2, HIPK2, RANBP9 and WWOX. Interacts (via SAM domain) with FBXO45 (via B30.2/SPRY domain). Interacts with YAP1 (phosphorylated form). Interacts with HCK (via SH3 domain); this inhibits TP73 activity and degradation. Interacts (via SAM domain) with NQO1; this interaction is NADH-dependent, stabilizes TP73 in response to oxidative stress and protects it from ubiquitin-independent degradation by the 20S proteasome. Zn(2+) serves as cofactor. Post-translationally, sumoylated on Lys-622, which potentiates proteasomal degradation but does not affect transcriptional activity. Phosphorylation by PLK1 and PLK3 inhibits the transcription regulator activity and pro-apoptotic function. Higher levels of phosphorylation seen in striatal neurons of. mutant huntingtin (htt) transgenic mice. In terms of processing, polyubiquitinated by RCHY1/PIRH2; leading to its degradation by the proteasome. Found in striatal neurons of mutant huntingtin (htt) transgenic mice (at protein level). Isoform 1 is expressed in the nasal epithelium, the vomeronasal organ, the hippocampus and the hypothalamus.

Its subcellular location is the nucleus. The protein resides in the cytoplasm. Functionally, participates in the apoptotic response to DNA damage. Isoforms containing the transactivation domain are pro-apoptotic, isoforms lacking the domain are anti-apoptotic and block the function of p53 and transactivating p73 isoforms. May be a tumor suppressor protein. Is an activator of FOXJ1 expression, essential for the positive regulation of lung ciliated cell differentiation. In Mus musculus (Mouse), this protein is Tumor protein p73 (Tp73).